Consider the following 179-residue polypeptide: Large ribosomal subunit protein uL5 (179 aa).

It belongs to the universal ribosomal protein uL5 family. Part of the 50S ribosomal subunit; part of the 5S rRNA/L5/L18/L25 subcomplex. Contacts the 5S rRNA and the P site tRNA. Forms a bridge to the 30S subunit in the 70S ribosome.

This is one of the proteins that bind and probably mediate the attachment of the 5S RNA into the large ribosomal subunit, where it forms part of the central protuberance. In the 70S ribosome it contacts protein S13 of the 30S subunit (bridge B1b), connecting the 2 subunits; this bridge is implicated in subunit movement. Contacts the P site tRNA; the 5S rRNA and some of its associated proteins might help stabilize positioning of ribosome-bound tRNAs. The polypeptide is Large ribosomal subunit protein uL5 (Vibrio atlanticus (strain LGP32) (Vibrio splendidus (strain Mel32))).